The primary structure comprises 199 residues: Transgelin-2 (199 aa).

At Ala2 the chain carries N-acetylalanine. A Phosphoserine modification is found at Ser11. An N6-acetyllysine mark is found at Lys17 and Lys20. The region spanning 24-136 is the Calponin-homology (CH) domain; sequence PDLEQILIQW…RTLMNLGGLA (113 aa). A Phosphoserine modification is found at Ser163. A Glycyl lysine isopeptide (Lys-Gly) (interchain with G-Cter in SUMO2) cross-link involves residue Lys171. A Calponin-like repeat occupies 174 to 199; sequence IGLQMGTNRGASQAGMTGYGMPRQIL. Residue Thr180 is modified to Phosphothreonine. Residues Arg182 and Arg196 each carry the omega-N-methylarginine modification.

The protein belongs to the calponin family.

The chain is Transgelin-2 (Tagln2) from Rattus norvegicus (Rat).